A 305-amino-acid polypeptide reads, in one-letter code: N-acetylmuramic acid 6-phosphate etherase (305 aa).

Residues 1–24 (MTTPPSSPLSDPRRTEGVHPTHTD) form a disordered region. Residues 11–24 (DPRRTEGVHPTHTD) are compositionally biased toward basic and acidic residues. An SIS domain is found at 62–225 (ALPRLERGGR…SSALMVRLGK (164 aa)). The active-site Proton donor is Glu90. Glu121 is an active-site residue.

The protein belongs to the GCKR-like family. MurNAc-6-P etherase subfamily. As to quaternary structure, homodimer.

It catalyses the reaction N-acetyl-D-muramate 6-phosphate + H2O = N-acetyl-D-glucosamine 6-phosphate + (R)-lactate. It functions in the pathway amino-sugar metabolism; N-acetylmuramate degradation. Specifically catalyzes the cleavage of the D-lactyl ether substituent of MurNAc 6-phosphate, producing GlcNAc 6-phosphate and D-lactate. The polypeptide is N-acetylmuramic acid 6-phosphate etherase (Deinococcus geothermalis (strain DSM 11300 / CIP 105573 / AG-3a)).